Reading from the N-terminus, the 136-residue chain is Cell wall synthesis protein CwsA (136 aa).

A helical transmembrane segment spans residues 94 to 114 (LLIAAVAVTVLGGGAAAFSIV).

This sequence belongs to the CwsA family. As to quaternary structure, interacts with CrgA and Wag31.

It localises to the cell membrane. In terms of biological role, required for regulated cell division, cell wall synthesis and the maintenance of cell shape. The polypeptide is Cell wall synthesis protein CwsA (Mycolicibacterium smegmatis (strain ATCC 700084 / mc(2)155) (Mycobacterium smegmatis)).